A 456-amino-acid chain; its full sequence is Bifunctional protein GlmU (456 aa).

A pyrophosphorylase region spans residues 1–229 (MTKKALSAVI…VMEVEGANNR (229 aa)). UDP-N-acetyl-alpha-D-glucosamine is bound by residues 11-14 (LAAG), K25, Q76, 81-82 (GT), 103-105 (YGD), G140, E154, N169, and N227. D105 contacts Mg(2+). A Mg(2+)-binding site is contributed by N227. The segment at 230 to 250 (LQLAALERYFQNKQASKLLLE) is linker. Residues 251–456 (GVMIYDPARF…QGWQRPIKKK (206 aa)) are N-acetyltransferase. Positions 333 and 351 each coordinate UDP-N-acetyl-alpha-D-glucosamine. The active-site Proton acceptor is the H363. UDP-N-acetyl-alpha-D-glucosamine contacts are provided by Y366 and N377. Acetyl-CoA contacts are provided by residues A380, 386–387 (NY), S405, A423, and R440.

The protein in the N-terminal section; belongs to the N-acetylglucosamine-1-phosphate uridyltransferase family. It in the C-terminal section; belongs to the transferase hexapeptide repeat family. As to quaternary structure, homotrimer. Mg(2+) serves as cofactor.

The protein resides in the cytoplasm. It carries out the reaction alpha-D-glucosamine 1-phosphate + acetyl-CoA = N-acetyl-alpha-D-glucosamine 1-phosphate + CoA + H(+). It catalyses the reaction N-acetyl-alpha-D-glucosamine 1-phosphate + UTP + H(+) = UDP-N-acetyl-alpha-D-glucosamine + diphosphate. It functions in the pathway nucleotide-sugar biosynthesis; UDP-N-acetyl-alpha-D-glucosamine biosynthesis; N-acetyl-alpha-D-glucosamine 1-phosphate from alpha-D-glucosamine 6-phosphate (route II): step 2/2. Its pathway is nucleotide-sugar biosynthesis; UDP-N-acetyl-alpha-D-glucosamine biosynthesis; UDP-N-acetyl-alpha-D-glucosamine from N-acetyl-alpha-D-glucosamine 1-phosphate: step 1/1. The protein operates within bacterial outer membrane biogenesis; LPS lipid A biosynthesis. Catalyzes the last two sequential reactions in the de novo biosynthetic pathway for UDP-N-acetylglucosamine (UDP-GlcNAc). The C-terminal domain catalyzes the transfer of acetyl group from acetyl coenzyme A to glucosamine-1-phosphate (GlcN-1-P) to produce N-acetylglucosamine-1-phosphate (GlcNAc-1-P), which is converted into UDP-GlcNAc by the transfer of uridine 5-monophosphate (from uridine 5-triphosphate), a reaction catalyzed by the N-terminal domain. This chain is Bifunctional protein GlmU, found in Haemophilus influenzae (strain ATCC 51907 / DSM 11121 / KW20 / Rd).